A 310-amino-acid chain; its full sequence is MTKKKIGLLVMAYGTPRTKEEIEPYYTHIRHGRKPSQELLDDLTERYEAIGGVSPLAKITDDQAIALEQKLNELYDDIEFKSYLGLKHIDPFIEDAVEQMKEDGVQEAVSIVLAPHFSTFSVKSYNGRAHEESKKIGGPRIQSVESWYDEPLFIQYWVDQVNDTMAKIEDKDKACVIFSAHSLPEKIVDYGDPYPQQLKETADLIAKGAGITNYAVGWQSEGNTPEPWLGPDVQDLTRDLYETHGYTSMIYCPVGFVADHLEVLYDNDYECKVVTDELGIDYYRPEMPNAKPEFIDCLATVIQKKLAEKE.

Fe-coproporphyrin III-binding positions include tyrosine 13, arginine 30, 46 to 47, serine 54, and tyrosine 125; that span reads RY. Residues histidine 181 and glutamate 262 each contribute to the Fe(2+) site.

This sequence belongs to the ferrochelatase family.

Its subcellular location is the cytoplasm. It catalyses the reaction Fe-coproporphyrin III + 2 H(+) = coproporphyrin III + Fe(2+). It participates in porphyrin-containing compound metabolism; protoheme biosynthesis. Its function is as follows. Involved in coproporphyrin-dependent heme b biosynthesis. Catalyzes the insertion of ferrous iron into coproporphyrin III to form Fe-coproporphyrin III. In Halalkalibacterium halodurans (strain ATCC BAA-125 / DSM 18197 / FERM 7344 / JCM 9153 / C-125) (Bacillus halodurans), this protein is Coproporphyrin III ferrochelatase.